Reading from the N-terminus, the 563-residue chain is Rhotekin (563 aa).

Residue Arg14 is modified to Omega-N-methylarginine. Positions 17–98 constitute an REM-1 domain; it reads ALEMEFKRGR…LQRRKEAQVL (82 aa). 2 positions are modified to phosphoserine: Ser30 and Ser106. A disordered region spans residues 96–116; the sequence is QVLGKTSRRPSDSGPPAERSP. Asymmetric dimethylarginine is present on Arg230. Ser232 is modified (phosphoserine). Residues 309–416 enclose the PH domain; sequence QPTASGTLRV…WMEALWQLFF (108 aa). The segment at 518 to 563 is disordered; that stretch reads TFSLDAVPPDHSPRARSVAPLPPQRSPRTRGLCSKGQPRTWLQSPV. 3 positions are modified to phosphoserine: Ser520, Ser529, and Ser543.

Interacts via its C-terminal region with the TAX1BP3 PDZ domain. This interaction facilitates Rho-mediated activation of the c-Fos serum response element (SRE). Interacts with SEPT9. Specifically binds to GTP-bound RHOA, RHOB and RHOC and inhibits their GTPase activity. In terms of tissue distribution, highly expressed in prostate, moderately in kidney, heart, brain, spleen, testis, placenta, small intestine, pancreas, skeletal muscle and peripheral blood leukocytes, and weakly in ovary, colon and thymus. Weakly expressed in all normal cell lines tested. Overexpressed in various cancer cell lines.

Functionally, mediates Rho signaling to activate NF-kappa-B and may confer increased resistance to apoptosis to cells in gastric tumorigenesis. May play a novel role in the organization of septin structures. The protein is Rhotekin of Homo sapiens (Human).